Reading from the N-terminus, the 166-residue chain is Interferon gamma (166 aa).

A signal peptide spans 1–23; it reads MKYTSYFLALLLCVLLGFSGSYG. Glutamine 24 is modified (pyrrolidone carboxylic acid). Residues asparagine 39 and asparagine 106 are each glycosylated (N-linked (GlcNAc...) asparagine).

The protein belongs to the type II (or gamma) interferon family. In terms of assembly, homodimer. Interacts with IFNGR1 (via extracellular domain); this interaction promotes IFNGR1 dimerization. As to expression, released primarily from activated T lymphocytes.

It is found in the secreted. Functionally, type II interferon produced by immune cells such as T-cells and NK cells that plays crucial roles in antimicrobial, antiviral, and antitumor responses by activating effector immune cells and enhancing antigen presentation. Primarily signals through the JAK-STAT pathway after interaction with its receptor IFNGR1 to affect gene regulation. Upon IFNG binding, IFNGR1 intracellular domain opens out to allow association of downstream signaling components JAK2, JAK1 and STAT1, leading to STAT1 activation, nuclear translocation and transcription of IFNG-regulated genes. Many of the induced genes are transcription factors such as IRF1 that are able to further drive regulation of a next wave of transcription. Plays a role in class I antigen presentation pathway by inducing a replacement of catalytic proteasome subunits with immunoproteasome subunits. In turn, increases the quantity, quality, and repertoire of peptides for class I MHC loading. Increases the efficiency of peptide generation also by inducing the expression of activator PA28 that associates with the proteasome and alters its proteolytic cleavage preference. Up-regulates as well MHC II complexes on the cell surface by promoting expression of several key molecules such as cathepsins B/CTSB, H/CTSH, and L/CTSL. Participates in the regulation of hematopoietic stem cells during development and under homeostatic conditions by affecting their development, quiescence, and differentiation. The protein is Interferon gamma (IFNG) of Bubalus carabanensis (Swamp type water buffalo).